The sequence spans 793 residues: Signal transducer and activator of transcription 5A (793 aa).

Position 90 is a phosphotyrosine (Tyr-90). A Phosphoserine modification is found at Ser-128. An SH2 domain is found at 589-686 (WNDGAILGFV…EVFAKYYTPV (98 aa)). Residues Tyr-682 and Tyr-694 each carry the phosphotyrosine modification. Ser-779 is modified (phosphoserine).

It belongs to the transcription factor STAT family. In terms of assembly, forms a homodimer or a heterodimer with a related family member. Interacts with NCOA1 and SOCS7. Binds NR3C1. Interacts with ERBB4. Interacts with EBF4. Interacts with CD69. In terms of processing, ISGylated. Tyrosine phosphorylated in response to KITLG/SCF, IL2, IL3, IL7, IL15, CSF2/GMCSF, GH1, PRL, EPO and THPO. Activated KIT promotes phosphorylation on tyrosine residues and subsequent translocation to the nucleus. Tyrosine phosphorylated in response to constitutively activated FGFR1, FGFR2, FGFR3 and FGFR4. Tyrosine phosphorylation is required for DNA-binding activity and dimerization. Serine phosphorylation is also required for maximal transcriptional activity. Tyrosine phosphorylated in response to signaling via activated FLT3; wild-type FLT3 results in much weaker phosphorylation than constitutively activated mutant FLT3. Alternatively, can be phosphorylated by JAK2 at Tyr-694. In terms of tissue distribution, in the virgin, found in most tissues except brain and muscle. During lactation, abundantly found in mammary tissue, as well as in other secretory organs such as salivary gland and seminal vesicle.

It localises to the cytoplasm. Its subcellular location is the nucleus. Its function is as follows. Carries out a dual function: signal transduction and activation of transcription. Mediates cellular responses to the cytokine KITLG/SCF and other growth factors. May mediate cellular responses to activated FGFR1, FGFR2, FGFR3 and FGFR4. Binds to the GAS element and activates PRL-induced transcription. Regulates the expression of milk proteins during lactation. This is Signal transducer and activator of transcription 5A (Stat5a) from Mus musculus (Mouse).